A 347-amino-acid chain; its full sequence is Haptoglobin (347 aa).

The first 18 residues, 1 to 18, serve as a signal peptide directing secretion; sequence MSALGAVIALLLWGQLFA. The region spanning 31-88 is the Sushi domain; sequence DGCPKPPQIAHGYVEHSVRYQCKNYYRLRTEGDGVYTLNSEKQWINKAVGDKLPECEA. Cystine bridges form between cysteine 52–cysteine 86, cysteine 90–cysteine 207, cysteine 250–cysteine 281, and cysteine 292–cysteine 322. Residues 103 to 347 form the Peptidase S1 domain; it reads ILGGHLDAKG…DWVQKTIAKN (245 aa). N-linked (GlcNAc...) asparagine glycans are attached at residues asparagine 125, asparagine 148, asparagine 152, and asparagine 182. An interaction with CD163 region spans residues 259–264; the sequence is VPEKKT.

It belongs to the peptidase S1 family. Tetramer of two alpha and two beta chains; disulfide-linked. The hemoglobin/haptoglobin complex is composed of a haptoglobin dimer bound to two hemoglobin alpha-beta dimers. Interacts with CD163. Interacts with ERGIC3.

It is found in the secreted. As a result of hemolysis, hemoglobin is found to accumulate in the kidney and is secreted in the urine. Haptoglobin captures, and combines with free plasma hemoglobin to allow hepatic recycling of heme iron and to prevent kidney damage. Haptoglobin also acts as an antioxidant, has antibacterial activity and plays a role in modulating many aspects of the acute phase response. Hemoglobin/haptoglobin complexes are rapidly cleared by the macrophage CD163 scavenger receptor expressed on the surface of liver Kupfer cells through an endocytic lysosomal degradation pathway. This Pongo abelii (Sumatran orangutan) protein is Haptoglobin (HP).